Reading from the N-terminus, the 216-residue chain is Germin-like protein 1-1 (216 aa).

A signal peptide spans 1-24 (MARVQLWVAAACAVVLALAAPSLA). A disulfide bridge connects residues Cys-34 and Cys-49. Residues Asn-52 and Asn-76 are each glycosylated (N-linked (GlcNAc...) asparagine). Residues 61–209 (AGLKNPGNTN…AFRVDVPQVD (149 aa)) form the Cupin type-1 domain. The Mn(2+) site is built by His-109, His-111, Glu-116, and His-155.

Belongs to the germin family. Oligomer (believed to be a pentamer but probably hexamer).

It is found in the secreted. The protein localises to the extracellular space. The protein resides in the apoplast. May play a role in plant defense. Probably has no oxalate oxidase activity even if the active site is conserved. This Oryza sativa subsp. japonica (Rice) protein is Germin-like protein 1-1 (GER4).